A 93-amino-acid chain; its full sequence is Large ribosomal subunit protein uL23c (93 aa).

It belongs to the universal ribosomal protein uL23 family. Part of the 50S ribosomal subunit.

The protein localises to the plastid. It is found in the chloroplast. Functionally, binds to 23S rRNA. The chain is Large ribosomal subunit protein uL23c (rpl23) from Adiantum capillus-veneris (Maidenhair fern).